The primary structure comprises 256 residues: 5-oxoprolinase subunit A 2 (256 aa).

Belongs to the LamB/PxpA family. As to quaternary structure, forms a complex composed of PxpA, PxpB and PxpC.

The enzyme catalyses 5-oxo-L-proline + ATP + 2 H2O = L-glutamate + ADP + phosphate + H(+). In terms of biological role, catalyzes the cleavage of 5-oxoproline to form L-glutamate coupled to the hydrolysis of ATP to ADP and inorganic phosphate. This chain is 5-oxoprolinase subunit A 2, found in Bradyrhizobium diazoefficiens (strain JCM 10833 / BCRC 13528 / IAM 13628 / NBRC 14792 / USDA 110).